A 541-amino-acid chain; its full sequence is Membrane protein insertase YidC (541 aa).

The next 6 helical transmembrane spans lie at 6 to 26 (NILL…WQAD), 325 to 345 (LVVD…LLMF), 349 to 369 (FVGN…GLLF), 420 to 440 (GGCL…WVLL), 457 to 477 (LSVQ…MFIM), and 500 to 520 (VIFT…WLVG).

It belongs to the OXA1/ALB3/YidC family. Type 1 subfamily. Interacts with the Sec translocase complex via SecD. Specifically interacts with transmembrane segments of nascent integral membrane proteins during membrane integration.

Its subcellular location is the cell inner membrane. Required for the insertion and/or proper folding and/or complex formation of integral membrane proteins into the membrane. Involved in integration of membrane proteins that insert both dependently and independently of the Sec translocase complex, as well as at least some lipoproteins. Aids folding of multispanning membrane proteins. The sequence is that of Membrane protein insertase YidC from Shewanella sp. (strain W3-18-1).